The chain runs to 590 residues: Cytidine monophosphate-N-acetylneuraminic acid hydroxylase (590 aa).

In terms of domain architecture, Rieske spans 14-112 (LSPVEVANLK…VEMDENNGLL (99 aa)). Residues Cys-54, His-56, Cys-75, and His-78 each contribute to the [2Fe-2S] cluster site.

Belongs to the CMP-Neu5Ac hydroxylase family. The cofactor is [2Fe-2S] cluster.

It is found in the cytoplasm. The enzyme catalyses CMP-N-acetyl-beta-neuraminate + 2 Fe(II)-[cytochrome b5] + O2 + 2 H(+) = CMP-N-glycoloyl-beta-neuraminate + 2 Fe(III)-[cytochrome b5] + H2O. It functions in the pathway amino-sugar metabolism; N-acetylneuraminate metabolism. Its function is as follows. Sialic acids are components of carbohydrate chains of glycoconjugates and are involved in cell-cell recognition and cell-pathogen interactions. Catalyzes the conversion of CMP-N-acetylneuraminic acid (CMP-Neu5Ac) into its hydroxylated derivative CMP-N-glycolylneuraminic acid (CMP-Neu5Gc), a sialic acid abundantly expressed at the surface of many cells. This Macaca mulatta (Rhesus macaque) protein is Cytidine monophosphate-N-acetylneuraminic acid hydroxylase (CMAH).